An 851-amino-acid polypeptide reads, in one-letter code: MPSSNSGNELLLRFFESAHFTSQLCVAYLSRYPNNIGIHHFLCEKLATFPYEEIEFFIPQLIHLVLNKDSESVALEEFIISQCEQNTQCALITFWYLQAHMVDLGLQPHSSCFKICKRLYNRIQILVFMSSSSLIQSQQKISENVTPALILSGIMLGGVCVPELLKKAGPIAIAQGRKAPRQDPDESDVDVLRRLSTEPRYSLDVLRSSLNNSIVEQHSEVSLRLKAPELTRTHSYQSSATLSIDEQRRVLRSNYFQQEIQFLFALQDISIRLIIVPRQARLSSLRAELALLNNNLPADVNIPLLRSYHKEVSHKIVRIDPKEATILNSAERVPYLIMVEVLSGELSFEPQSKKNKAKVQKIVSHKNQRKRWFDLTDVDPYTNLQDSTDNDISESESEGGDLSMSPLIKGLVPDTLSLSKSFSSFGNVSLQVPSSHRDTDVVLLSGRHSDSDGNGALKRSKIYASEITARMRAAATMLSQLDAEGSRRPKAETERIKNSIILDMQRLEEERLNEPSIYPVSVDISCAEDLRFGKETQKAERKGDRDDPSAATFQEDWYAKKERIRKSSPYGHYPNWDLVSVIVKTGADLRQETFACQLIYAFQRVWLECKEKVWVRRMKILVTGDNSGLIETITNAISVHSIKKNLTKQLREAELAQGKIAGKNVVTLKDYFIKQFGDPNSSRYRQAQTNFLQSLVAYSIISYLLQLKDRHNGNVLIDSEGHIIHIDFGFLLTNTPGNVGFESAPFKLTADYLEILDDRFDEYRSLMKAAFKSVRKNADQIILLVEVMQNNSTMPCFRAGENTSAQLLQRFQLQLGDKECDDFVDLLIQKANCSVWTRLYDLFQNITNGIY.

The 123-residue stretch at 1–123 (MPSSNSGNEL…KICKRLYNRI (123 aa)) folds into the PIK helical domain. Serine 202, serine 219, serine 222, and serine 235 each carry phosphoserine. A Phosphotyrosine modification is found at tyrosine 236. The tract at residues 384–404 (LQDSTDNDISESESEGGDLSM) is disordered. The segment covering 388-399 (TDNDISESESEG) has biased composition (acidic residues). A PI3K/PI4K catalytic domain is found at 558 to 836 (YAKKERIRKS…LIQKANCSVW (279 aa)). The interval 564 to 570 (IRKSSPY) is G-loop. Positions 706–714 (QLKDRHNGN) are catalytic loop. The activation loop stretch occupies residues 725-749 (HIDFGFLLTNTPGNVGFESAPFKLT).

This sequence belongs to the PI3/PI4-kinase family. As to quaternary structure, interacts with cdc4 and cam2.

It localises to the golgi apparatus. It is found in the nucleus. The enzyme catalyses a 1,2-diacyl-sn-glycero-3-phospho-(1D-myo-inositol) + ATP = a 1,2-diacyl-sn-glycero-3-phospho-(1D-myo-inositol 4-phosphate) + ADP + H(+). Its function is as follows. Acts on phosphatidylinositol (PI) in the first committed step in the production of the second messenger inositol 1,4,5,-trisphosphate. PIK1 is part of a nuclear phosphoinositide cycle and could control cytokinesis through the actin cytoskeleton. The sequence is that of Phosphatidylinositol 4-kinase pik1 (pik1) from Schizosaccharomyces pombe (strain 972 / ATCC 24843) (Fission yeast).